A 349-amino-acid chain; its full sequence is 4-hydroxythreonine-4-phosphate dehydrogenase (349 aa).

Substrate is bound by residues His-141 and Thr-142. A divalent metal cation contacts are provided by His-176, His-221, and His-276. Substrate-binding residues include Lys-284, Asn-293, and Arg-302.

This sequence belongs to the PdxA family. As to quaternary structure, homodimer. The cofactor is Zn(2+). Mg(2+) is required as a cofactor. Co(2+) serves as cofactor.

It localises to the cytoplasm. The catalysed reaction is 4-(phosphooxy)-L-threonine + NAD(+) = 3-amino-2-oxopropyl phosphate + CO2 + NADH. It functions in the pathway cofactor biosynthesis; pyridoxine 5'-phosphate biosynthesis; pyridoxine 5'-phosphate from D-erythrose 4-phosphate: step 4/5. Catalyzes the NAD(P)-dependent oxidation of 4-(phosphooxy)-L-threonine (HTP) into 2-amino-3-oxo-4-(phosphooxy)butyric acid which spontaneously decarboxylates to form 3-amino-2-oxopropyl phosphate (AHAP). The chain is 4-hydroxythreonine-4-phosphate dehydrogenase from Methylorubrum extorquens (strain PA1) (Methylobacterium extorquens).